The sequence spans 36 residues: MVEILLSGIVLGLIPITILGLLMAAYFQYQRSKAAS.

Residues 5–25 (LLSGIVLGLIPITILGLLMAA) traverse the membrane as a helical segment.

Belongs to the PetG family. As to quaternary structure, the 4 large subunits of the cytochrome b6-f complex are cytochrome b6, subunit IV (17 kDa polypeptide, PetD), cytochrome f and the Rieske protein, while the 4 small subunits are PetG, PetL, PetM and PetN. The complex functions as a dimer.

Its subcellular location is the plastid. It localises to the chloroplast thylakoid membrane. In terms of biological role, component of the cytochrome b6-f complex, which mediates electron transfer between photosystem II (PSII) and photosystem I (PSI), cyclic electron flow around PSI, and state transitions. PetG is required for either the stability or assembly of the cytochrome b6-f complex. This chain is Cytochrome b6-f complex subunit 5, found in Cyanidioschyzon merolae (strain NIES-3377 / 10D) (Unicellular red alga).